A 62-amino-acid chain; its full sequence is Photosystem II reaction center protein Z (62 aa).

The next 2 membrane-spanning stretches (helical) occupy residues 8-28 (VLTA…VAYA) and 41-61 (YVGS…NFLV).

The protein belongs to the PsbZ family. As to quaternary structure, PSII is composed of 1 copy each of membrane proteins PsbA, PsbB, PsbC, PsbD, PsbE, PsbF, PsbH, PsbI, PsbJ, PsbK, PsbL, PsbM, PsbT, PsbX, PsbY, PsbZ, Psb30/Ycf12, peripheral proteins PsbO, CyanoQ (PsbQ), PsbU, PsbV and a large number of cofactors. It forms dimeric complexes.

It is found in the cellular thylakoid membrane. Its function is as follows. May control the interaction of photosystem II (PSII) cores with the light-harvesting antenna, regulates electron flow through the 2 photosystem reaction centers. PSII is a light-driven water plastoquinone oxidoreductase, using light energy to abstract electrons from H(2)O, generating a proton gradient subsequently used for ATP formation. The polypeptide is Photosystem II reaction center protein Z (Crocosphaera subtropica (strain ATCC 51142 / BH68) (Cyanothece sp. (strain ATCC 51142))).